We begin with the raw amino-acid sequence, 540 residues long: MTAKQIIFDEAARRKLQAGVDALANTVKVTLGPRGRNVVLDKKFGAPAVANDGVTIAREIELEDPFENMGAQLVKEVATKTNDVAGDGTTTSTVLAQAIVKEGLKNVTGGANPMILKRGIEKAVQVAVEELRKQAIPVETNKAIAEVAAISANNDREIGELVAKAMDTVGKDGVITVEESKTLHTELETVEGMQFDRGYVSAYMVTDTEKMEAVLNEPYILITDKKISAVQDLLPILEKVVQRGKPLLIIAEDVEGEALATLVVNKLRGTLQVAAVKAPGFGDRRKAMLEDIAILTGGEVVSEELGRKLENATIEMLGQARQVRIEKEKTTIIDGAGSSEAIKNRVAAIKRQIEETTSDFDREKLQERLAKLAGGVAVIKVGAATEVELKEKKLRIEDALNATRAAVEEGIVAGGGVALLQTQKAIDELIKTLEGDEKVGAQIVRRAVEEPLRCIVENGGLEGSVVVEKVRTLPVGHGFDAMKEEYVDMVAAGIIDPVKVTRSALQNAASIAALILTTEALVTEKPEKKENNPAPNMDMM.

ATP-binding positions include 30–33 (TLGP), 87–91 (DGTTT), Gly415, and Asp496.

Belongs to the chaperonin (HSP60) family. As to quaternary structure, forms a cylinder of 14 subunits composed of two heptameric rings stacked back-to-back. Interacts with the co-chaperonin GroES.

The protein resides in the cytoplasm. The enzyme catalyses ATP + H2O + a folded polypeptide = ADP + phosphate + an unfolded polypeptide.. Its function is as follows. Together with its co-chaperonin GroES, plays an essential role in assisting protein folding. The GroEL-GroES system forms a nano-cage that allows encapsulation of the non-native substrate proteins and provides a physical environment optimized to promote and accelerate protein folding. This is Chaperonin GroEL from Symbiobacterium thermophilum (strain DSM 24528 / JCM 14929 / IAM 14863 / T).